The chain runs to 428 residues: Hercynine oxygenase (428 aa).

Residue H46 participates in Fe cation binding. Position 82–85 (82–85 (RASR)) interacts with gamma-L-glutamyl-L-cysteine. Fe cation-binding residues include H129 and H133. The gamma-L-glutamyl-L-cysteine site is built by D411 and R415.

Belongs to the EgtB family. As to quaternary structure, monomer. Fe(2+) is required as a cofactor.

It carries out the reaction gamma-L-glutamyl-L-cysteine + hercynine + O2 = gamma-L-glutamyl-hercynylcysteine S-oxide + H2O. Its pathway is amino-acid biosynthesis; ergothioneine biosynthesis. Catalyzes the oxidative sulfurization of hercynine (N-alpha,N-alpha,N-alpha-trimethyl-L-histidine) into hercynyl-gamma-L-glutamyl-L-cysteine sulfoxide, a step in the biosynthesis pathway of ergothioneine. Cannot use the alternative thiols cysteine, N-acetylcysteine, or glutathione instead of gamma-glutamylcysteine as substrates, and histidine is a poor sulfur acceptor substrate compared to hercynine. The protein is Hercynine oxygenase of Mycolicibacterium smegmatis (strain ATCC 700084 / mc(2)155) (Mycobacterium smegmatis).